The following is a 278-amino-acid chain: Probable cytochrome c oxidase subunit 3 (278 aa).

The next 6 membrane-spanning stretches (helical) occupy residues 21–41, 46–66, 89–109, 174–194, 212–232, and 256–276; these read PWPVLTSFALLLLVIGGVSFM, FNIYILSAGVISVGYCLYSWW, IGMALFILTEIVFFGVFFASF, CVTALALTILLGIFFTTMQAY, FYLATGFHGAHVIIGTIFLIV, and AWYWHFVDVVWLFLFTFVYIF.

It belongs to the cytochrome c oxidase subunit 3 family.

The protein resides in the cell membrane. It catalyses the reaction 4 Fe(II)-[cytochrome c] + O2 + 8 H(+)(in) = 4 Fe(III)-[cytochrome c] + 2 H2O + 4 H(+)(out). The sequence is that of Probable cytochrome c oxidase subunit 3 (ctaE) from Rickettsia felis (strain ATCC VR-1525 / URRWXCal2) (Rickettsia azadi).